Consider the following 253-residue polypeptide: Triosephosphate isomerase (253 aa).

Substrate-binding residues include N12 and K14. Catalysis depends on H96, which acts as the Electrophile. E169 functions as the Proton acceptor in the catalytic mechanism.

It belongs to the triosephosphate isomerase family. Homodimer.

It localises to the cytoplasm. The catalysed reaction is D-glyceraldehyde 3-phosphate = dihydroxyacetone phosphate. The protein operates within carbohydrate biosynthesis; gluconeogenesis. Its pathway is carbohydrate degradation; glycolysis; D-glyceraldehyde 3-phosphate from glycerone phosphate: step 1/1. Antigen to the host M.1 monoclonal antibody. The protein is Triosephosphate isomerase (TPI) of Schistosoma mansoni (Blood fluke).